A 205-amino-acid polypeptide reads, in one-letter code: Dihydrofolate reductase (205 aa).

The DHFR domain maps to 1 to 201 (MLALVVALAS…TSFKMFLYTK (201 aa)). NADP(+)-binding positions include Ala7 and 13–19 (GIGNANA). 29 to 34 (DMAWFR) provides a ligand contact to substrate. 62-64 (RRT) provides a ligand contact to NADP(+). Substrate is bound at residue Arg78. Residues 84–86 (SRG) and 118–125 (GGRDVYSL) contribute to the NADP(+) site.

This sequence belongs to the dihydrofolate reductase family.

It carries out the reaction (6S)-5,6,7,8-tetrahydrofolate + NADP(+) = 7,8-dihydrofolate + NADPH + H(+). It functions in the pathway cofactor biosynthesis; tetrahydrofolate biosynthesis; 5,6,7,8-tetrahydrofolate from 7,8-dihydrofolate: step 1/1. Functionally, key enzyme in folate metabolism. Catalyzes an essential reaction for de novo glycine and purine synthesis, and for DNA precursor synthesis. The sequence is that of Dihydrofolate reductase (DHFR-1) from Encephalitozoon cuniculi (strain GB-M1) (Microsporidian parasite).